Here is a 325-residue protein sequence, read N- to C-terminus: ADP-ribose glycohydrolase MACROD1 (325 aa).

Residues 21 to 55 (LGAPRPWPGPSPGATRTRSSACGPPASLSAHHPRA) are disordered. N6-succinyllysine is present on residues Lys96, Lys103, and Lys129. Residue Lys138 forms a Glycyl lysine isopeptide (Lys-Gly) (interchain with G-Cter in SUMO2) linkage. Residues 141–322 (EPKYKKDKQL…IYRERLPHYF (182 aa)) enclose the Macro domain. 159–161 (GDI) lines the substrate pocket. Lys163 is subject to N6-acetyllysine. Residues 172–174 (AAN), 179–184 (GGGGVD), 267–273 (ISTGVFG), and Phe306 contribute to the substrate site.

Belongs to the MacroD-type family. MacroD1/2-like subfamily. Interacts with ESR1; Interacts in a manner that is estrogen independent but is enhanced by estrogen. Interacts (via macro domain) with AR.

It localises to the nucleus. The catalysed reaction is 3''-O-acetyl-ADP-D-ribose + H2O = ADP-D-ribose + acetate + H(+). It catalyses the reaction 2''-O-acetyl-ADP-D-ribose + H2O = ADP-D-ribose + acetate + H(+). The enzyme catalyses 4-O-(ADP-D-ribosyl)-L-aspartyl-[protein] + H2O = L-aspartyl-[protein] + ADP-D-ribose + H(+). It carries out the reaction 5-O-(ADP-D-ribosyl)-L-glutamyl-[protein] + H2O = L-glutamyl-[protein] + ADP-D-ribose + H(+). The catalysed reaction is alpha-NAD(+) + H2O = ADP-D-ribose + nicotinamide + H(+). Subject to competitive inhibition by the product ADP-ribose. In terms of biological role, removes ADP-ribose from aspartate and glutamate residues in proteins bearing a single ADP-ribose moiety. Inactive towards proteins bearing poly-ADP-ribose. Deacetylates O-acetyl-ADP ribose, a signaling molecule generated by the deacetylation of acetylated lysine residues in histones and other proteins. Plays a role in estrogen signaling. Binds to androgen receptor (AR) and amplifies the transactivation function of AR in response to androgen. May play an important role in carcinogenesis and/or progression of hormone-dependent cancers by feed-forward mechanism that activates ESR1 transactivation. Could be an ESR1 coactivator, providing a positive feedback regulatory loop for ESR1 signal transduction. Could be involved in invasive growth by down-regulating CDH1 in endometrial cancer cells. Enhances ESR1-mediated transcription activity. The chain is ADP-ribose glycohydrolase MACROD1 (MACROD1) from Bos taurus (Bovine).